The chain runs to 835 residues: Bifunctional uridylyltransferase/uridylyl-removing enzyme (835 aa).

Positions Met1–Pro316 are uridylyltransferase. Residues Leu317–Val650 form a uridylyl-removing region. In terms of domain architecture, HD spans Val431–Trp554. The interval Gln610 to Pro645 is disordered. Residues Pro621–Pro630 show a composition bias toward pro residues. Low complexity predominate over residues Ser631–Ala642. ACT domains lie at Glu651 to Arg736 and Val765 to Thr835.

Belongs to the GlnD family. Requires Mg(2+) as cofactor.

The catalysed reaction is [protein-PII]-L-tyrosine + UTP = [protein-PII]-uridylyl-L-tyrosine + diphosphate. It carries out the reaction [protein-PII]-uridylyl-L-tyrosine + H2O = [protein-PII]-L-tyrosine + UMP + H(+). With respect to regulation, uridylyltransferase (UTase) activity is inhibited by glutamine, while glutamine activates uridylyl-removing (UR) activity. Modifies, by uridylylation and deuridylylation, the PII regulatory proteins (GlnB and homologs), in response to the nitrogen status of the cell that GlnD senses through the glutamine level. Under low glutamine levels, catalyzes the conversion of the PII proteins and UTP to PII-UMP and PPi, while under higher glutamine levels, GlnD hydrolyzes PII-UMP to PII and UMP (deuridylylation). Thus, controls uridylylation state and activity of the PII proteins, and plays an important role in the regulation of nitrogen assimilation and metabolism. The chain is Bifunctional uridylyltransferase/uridylyl-removing enzyme from Streptomyces coelicolor (strain ATCC BAA-471 / A3(2) / M145).